We begin with the raw amino-acid sequence, 586 residues long: Major facilitator superfamily domain-containing protein 6-like (586 aa).

2 consecutive transmembrane segments (helical) span residues 50 to 70 (ILMGTKHLIATCWIPFCAFLA) and 78 to 98 (MFLTGSLLSSAGASLLMVLVP). Residues 218–237 (GPVNLSKPQGDTQTPDHSSK) are disordered. Positions 223-237 (SKPQGDTQTPDHSSK) are enriched in polar residues. 9 helical membrane-spanning segments follow: residues 240–260 (PWTFILSLGVVVFWELLAAPL), 284–304 (LWVWKLLGVSAGVCGIAALVG), 318–338 (VIYFYSYSLVSTLALAVSTAF), 365–385 (LILLAFTVFWIGATASTVQDF), 397–417 (ELVMGFSVALSLLGEILFHPF), 428–448 (VGVLGLGLGCLALQVLYYAFI), 454–474 (VLPVQILSTISSGALWWAVGA), 494–514 (GHFYGSGCSLGSFVGGFVVLH), and 519–538 (VLYEACCVVLLLWLALFLSI).

Belongs to the major facilitator superfamily. MFSD6 family.

The protein localises to the membrane. The polypeptide is Major facilitator superfamily domain-containing protein 6-like (Mfsd6l) (Mus musculus (Mouse)).